Reading from the N-terminus, the 205-residue chain is HTH-type transcriptional regulator LuxR (205 aa).

Residues 15-75 enclose the HTH tetR-type domain; the sequence is LKRKQQLMEI…EVLNHVVRQF (61 aa). The H-T-H motif DNA-binding region spans 39 to 58; the sequence is HADIAEIAQVSVATVFNYFP.

In terms of biological role, regulatory protein of bacterial bioluminescence. It probably binds the autoinducer molecule and potentiates the transcription of the bioluminescence operon. In Vibrio harveyi (Beneckea harveyi), this protein is HTH-type transcriptional regulator LuxR (luxR).